Reading from the N-terminus, the 324-residue chain is Delta-aminolevulinic acid dehydratase (324 aa).

Zn(2+)-binding residues include C118, C120, and C128. K195 acts as the Schiff-base intermediate with substrate in catalysis. Residues R205 and R217 each coordinate 5-aminolevulinate. E233 is a binding site for Mg(2+). The active-site Schiff-base intermediate with substrate is K248. 2 residues coordinate 5-aminolevulinate: S274 and Y313.

This sequence belongs to the ALAD family. Homooctamer. The cofactor is Zn(2+).

The catalysed reaction is 2 5-aminolevulinate = porphobilinogen + 2 H2O + H(+). It functions in the pathway porphyrin-containing compound metabolism; protoporphyrin-IX biosynthesis; coproporphyrinogen-III from 5-aminolevulinate: step 1/4. Its function is as follows. Catalyzes an early step in the biosynthesis of tetrapyrroles. Binds two molecules of 5-aminolevulinate per subunit, each at a distinct site, and catalyzes their condensation to form porphobilinogen. This chain is Delta-aminolevulinic acid dehydratase (hemB), found in Staphylococcus aureus (strain NCTC 8325 / PS 47).